Here is a 281-residue protein sequence, read N- to C-terminus: F-actin-capping protein subunit alpha (281 aa).

The protein belongs to the F-actin-capping protein alpha subunit family. As to quaternary structure, component of the F-actin capping complex, composed of a heterodimer of an alpha and a beta subunit.

The protein localises to the cytoplasm. It localises to the cytoskeleton. In terms of biological role, F-actin-capping proteins bind in a Ca(2+)-independent manner to the fast growing ends of actin filaments (barbed end) thereby blocking the exchange of subunits at these ends. Unlike other capping proteins (such as gelsolin and severin), these proteins do not sever actin filaments. The chain is F-actin-capping protein subunit alpha (acpB) from Dictyostelium discoideum (Social amoeba).